The chain runs to 228 residues: Woronin body membrane protein wscA (228 aa).

The next 4 helical transmembrane spans lie at 89–109, 130–150, 162–182, and 185–205; these read MTLYGMFISAPLGHLLVGILQ, LIVSPIQNAVYLMSMAIIAGA, AGFMPVMKVSWITSPLALAFA, and FLPEHTWVPFFNIIGFFIGTY.

Belongs to the peroxisomal membrane protein PXMP2/4 family. Self-assembles into detergent-resistant oligomers and forms a complex with hexA assemblies.

The protein resides in the peroxisome membrane. Its subcellular location is the cell septum. Woronin sorting complex protein involved in both Woronin bodies (WB) formation and inherence. Localizes to large peroxisome membranes where it self-assembles into detergent-resistant oligomers that envelop hex-1 assemblies, producing asymmetrical nascent WBs. These structures are then delivered to the cell cortex, which permits partitioning of the nascent WB and WB inheritance. This Aspergillus fumigatus (strain ATCC MYA-4609 / CBS 101355 / FGSC A1100 / Af293) (Neosartorya fumigata) protein is Woronin body membrane protein wscA.